The following is a 173-amino-acid chain: MAESQAKSPGGCGSHESGGDQSPRSLHVREQDRFLPIANISRIMKRGLPANGKIAKDAKEIVQECVSEFISFVTSEASDKCQREKRKTINGDDLLWAMATLGFEDYMEPLKVYLMRYREMEGDTKGSAKGGDPNAKKDGQSSQNGQFSQLAHQGPYGNSQAQQHMMVPMPGTD.

Residues 1 to 30 (MAESQAKSPGGCGSHESGGDQSPRSLHVRE) are disordered. Position 2 is an N-acetylalanine (Ala-2). A DNA-binding region spans residues 35–41 (LPIANIS). Residues 62–73 (VQECVSEFISFV) are subunit association domain (SAD). The disordered stretch occupies residues 123–173 (DTKGSAKGGDPNAKKDGQSSQNGQFSQLAHQGPYGNSQAQQHMMVPMPGTD). Positions 140–163 (QSSQNGQFSQLAHQGPYGNSQAQQ) are enriched in polar residues.

The protein belongs to the NFYB/HAP3 subunit family. Heterotrimeric transcription factor composed of three components, NF-YA, NF-YB and NF-YC. NF-YB and NF-YC must interact and dimerize for NF-YA association and DNA binding. Expressed in flowers and mature rosettes.

It is found in the nucleus. Component of the NF-Y/HAP transcription factor complex. The NF-Y complex stimulates the transcription of various genes by recognizing and binding to a CCAAT motif in promoters. The protein is Nuclear transcription factor Y subunit B-8 (NFYB8) of Arabidopsis thaliana (Mouse-ear cress).